A 194-amino-acid chain; its full sequence is Protein GrpE (194 aa).

The segment covering 1–24 has biased composition (basic and acidic residues); that stretch reads MEEKDKEEKVTGENLEPEDKNLEQ. Residues 1-41 form a disordered region; the sequence is MEEKDKEEKVTGENLEPEDKNLEQEDKEEVVGPQEEQQIDE.

Belongs to the GrpE family. In terms of assembly, homodimer.

It is found in the cytoplasm. In terms of biological role, participates actively in the response to hyperosmotic and heat shock by preventing the aggregation of stress-denatured proteins, in association with DnaK and GrpE. It is the nucleotide exchange factor for DnaK and may function as a thermosensor. Unfolded proteins bind initially to DnaJ; upon interaction with the DnaJ-bound protein, DnaK hydrolyzes its bound ATP, resulting in the formation of a stable complex. GrpE releases ADP from DnaK; ATP binding to DnaK triggers the release of the substrate protein, thus completing the reaction cycle. Several rounds of ATP-dependent interactions between DnaJ, DnaK and GrpE are required for fully efficient folding. In Carboxydothermus hydrogenoformans (strain ATCC BAA-161 / DSM 6008 / Z-2901), this protein is Protein GrpE.